The chain runs to 366 residues: Phenylalanine dehydrogenase (366 aa).

Residue Arg-45 participates in NAD(+) binding. Position 69 (Lys-69) interacts with L-phenylalanine. Lys-81 is an active-site residue. NAD(+) contacts are provided by residues Asp-116, Thr-151, 181 to 187 (GVGKVGE), 204 to 205 (DI), 241 to 242 (AK), and 262 to 264 (SAN). Asn-264 serves as a coordination point for L-phenylalanine.

It belongs to the Glu/Leu/Phe/Val dehydrogenases family.

It catalyses the reaction L-phenylalanine + NAD(+) + H2O = 3-phenylpyruvate + NH4(+) + NADH + H(+). Its pathway is amino-acid biosynthesis; L-phenylalanine biosynthesis; L-phenylalanine from phenylpyruvate (PDH route): step 1/1. Its function is as follows. Catalyzes the reversible NAD(+)-dependent oxidative deamination of L-phenylalanine to phenylpyruvate. This chain is Phenylalanine dehydrogenase, found in Thermoactinomyces intermedius.